Here is a 182-residue protein sequence, read N- to C-terminus: Large ribosomal subunit protein bL25 (182 aa).

This sequence belongs to the bacterial ribosomal protein bL25 family. CTC subfamily. As to quaternary structure, part of the 50S ribosomal subunit; part of the 5S rRNA/L5/L18/L25 subcomplex. Contacts the 5S rRNA. Binds to the 5S rRNA independently of L5 and L18.

Its function is as follows. This is one of the proteins that binds to the 5S RNA in the ribosome where it forms part of the central protuberance. The polypeptide is Large ribosomal subunit protein bL25 (Borrelia garinii subsp. bavariensis (strain ATCC BAA-2496 / DSM 23469 / PBi) (Borreliella bavariensis)).